The chain runs to 708 residues: Elongation factor G (708 aa).

Residues 8-290 (KRYRNIGISA…AVIQYLPAPM (283 aa)) form the tr-type G domain. Residues 17–24 (AHIDAGKT), 88–92 (DTPGH), and 142–145 (NKMD) contribute to the GTP site.

It belongs to the TRAFAC class translation factor GTPase superfamily. Classic translation factor GTPase family. EF-G/EF-2 subfamily.

Its subcellular location is the cytoplasm. Catalyzes the GTP-dependent ribosomal translocation step during translation elongation. During this step, the ribosome changes from the pre-translocational (PRE) to the post-translocational (POST) state as the newly formed A-site-bound peptidyl-tRNA and P-site-bound deacylated tRNA move to the P and E sites, respectively. Catalyzes the coordinated movement of the two tRNA molecules, the mRNA and conformational changes in the ribosome. In Psychrobacter cryohalolentis (strain ATCC BAA-1226 / DSM 17306 / VKM B-2378 / K5), this protein is Elongation factor G.